The following is a 446-amino-acid chain: Rhamnogalacturonase A (446 aa).

Positions methionine 1–glycine 18 are cleaved as a signal peptide. Cysteine 39 and cysteine 65 are oxidised to a cystine. 3 N-linked (GlcNAc...) asparagine glycosylation sites follow: asparagine 50, asparagine 115, and asparagine 124. Aspartate 216 serves as the catalytic Proton donor. Cysteines 218 and 235 form a disulfide. Asparagine 236, asparagine 281, and asparagine 318 each carry an N-linked (GlcNAc...) asparagine glycan. 2 cysteine pairs are disulfide-bonded: cysteine 341–cysteine 347 and cysteine 369–cysteine 378.

This sequence belongs to the glycosyl hydrolase 28 family.

The protein resides in the secreted. It carries out the reaction Endohydrolysis of alpha-D-GalA-(1-&gt;2)-alpha-L-Rha glycosidic bond in the rhamnogalacturonan I backbone with initial inversion of anomeric configuration releasing oligosaccharides with beta-D-GalA at the reducing end.. Its function is as follows. Pectinolytic enzymes consist of four classes of enzymes: pectine lyase, polygalacturonase, pectin methylesterase and rhamnogalacturonase. Hydrolyzes alpha-D-galacturonopyranosyl-(1,2)-alpha-L-rhamnopyranosyl linkages in the backbone of the hairy regions of pectins. This Aspergillus niger protein is Rhamnogalacturonase A (rhgA).